The primary structure comprises 443 residues: F-box only protein 39 (443 aa).

Residues Gln-13–Arg-59 form the F-box domain.

In terms of assembly, directly interacts with SKP1 and CUL1.

Functionally, substrate-recognition component of the SCF (SKP1-CUL1-F-box protein)-type E3 ubiquitin ligase complex. The chain is F-box only protein 39 (Fbxo39) from Mus musculus (Mouse).